A 239-amino-acid chain; its full sequence is Ribonuclease PH (239 aa).

Phosphate contacts are provided by residues Arg86 and 124-126 (GTR).

The protein belongs to the RNase PH family. Homohexameric ring arranged as a trimer of dimers.

It catalyses the reaction tRNA(n+1) + phosphate = tRNA(n) + a ribonucleoside 5'-diphosphate. Its function is as follows. Phosphorolytic 3'-5' exoribonuclease that plays an important role in tRNA 3'-end maturation. Removes nucleotide residues following the 3'-CCA terminus of tRNAs; can also add nucleotides to the ends of RNA molecules by using nucleoside diphosphates as substrates, but this may not be physiologically important. Probably plays a role in initiation of 16S rRNA degradation (leading to ribosome degradation) during starvation. This Cupriavidus necator (strain ATCC 17699 / DSM 428 / KCTC 22496 / NCIMB 10442 / H16 / Stanier 337) (Ralstonia eutropha) protein is Ribonuclease PH.